A 132-amino-acid polypeptide reads, in one-letter code: Flagellar basal body rod protein FlgB (132 aa).

The protein belongs to the flagella basal body rod proteins family. In terms of assembly, the basal body constitutes a major portion of the flagellar organelle and consists of a number of rings mounted on a central rod. In Gram-negative bacteria, at least four rings, L, P, S and M are present, whereas Gram-positive bacteria lack the L and P rings. The rod consists of about 26 subunits of FlgG in the distal portion, and FlgB, FlgC and FlgF build up the proximal portion of the rod with about 6 subunits each. Rod assembly occurs by export via the flagellum-specific pathway of its constituent proteins and by their incorporation into the rod structure in the probable order of FlgB, FlgC, FlgF and FlgG. Another protein, FliE, also assembles onto the stable rod structure.

The protein resides in the bacterial flagellum basal body. In terms of biological role, structural component of flagellum, the bacterial motility apparatus. Part of the rod structure of flagellar basal body. This Aeromonas hydrophila protein is Flagellar basal body rod protein FlgB.